The sequence spans 460 residues: MLTTRFAPSPTGFLHVGGLRTALYSYLYARKNGGKFVLRIEDTDLKRNSEEAVIAIREAFNWCGLDYDGEVTYQSKRFDIYKEYIKKLLDEGKAYKCYMTKVELDELRAAQEAKKERPKYDGRYRDFTGTPPAGIEPVIRIKAPLNGTIEFKDGIKGDVKFNCADILDDFIIARSDGTPTYNFCVVIDDALMGITHVIRGDDHLSNTPKQIILYEALGFNLPEFFHVAMINGSDGSKLSKRHGATDVMEYKSMGYLPEALLNFLVRLGWSHGDDEIFSMSDMLKYFDPHDINKSASTYNLTKLDWLNAHYIKTLPYEHLADDMKFFGIDFRAFDKGELLLNSLRERSKTLVELKNSALNIINSPETYDEKAVAKFINTESKELLKEYAANLEDKNISAKDCEDITIAFLEKRDKKLKDIAQPIRIAITGSAVSPSIFEVIEVIGIKELKSRIAALLEKLD.

Residues 8-18 (PSPTGFLHVGG) carry the 'HIGH' region motif. The 'KMSKS' region signature appears at 237–241 (KLSKR). Position 240 (lysine 240) interacts with ATP.

The protein belongs to the class-I aminoacyl-tRNA synthetase family. Glutamate--tRNA ligase type 1 subfamily. In terms of assembly, monomer.

It is found in the cytoplasm. It carries out the reaction tRNA(Glu) + L-glutamate + ATP = L-glutamyl-tRNA(Glu) + AMP + diphosphate. Its function is as follows. Catalyzes the attachment of glutamate to tRNA(Glu) in a two-step reaction: glutamate is first activated by ATP to form Glu-AMP and then transferred to the acceptor end of tRNA(Glu). The polypeptide is Glutamate--tRNA ligase 2 (Campylobacter fetus subsp. fetus (strain 82-40)).